Here is a 119-residue protein sequence, read N- to C-terminus: Membrane-anchored ubiquitin-fold protein 6 (119 aa).

The Ubiquitin-like domain occupies 8–76 (IELKFRLADG…NNRTLAESRL (69 aa)). Residue Cys114 is the site of S-palmitoyl cysteine attachment. Cys116 carries the post-translational modification Cysteine methyl ester. The S-geranylgeranyl cysteine moiety is linked to residue Cys116. A propeptide spans 117–119 (TIL) (removed in mature form).

As to expression, ubiquitous.

It is found in the cell membrane. Functionally, may serve as docking site to facilitate the association of other proteins to the plasma membrane. The polypeptide is Membrane-anchored ubiquitin-fold protein 6 (MUB6) (Arabidopsis thaliana (Mouse-ear cress)).